The chain runs to 136 residues: Protein NrdI (136 aa).

Belongs to the NrdI family.

In terms of biological role, probably involved in ribonucleotide reductase function. In Erwinia tasmaniensis (strain DSM 17950 / CFBP 7177 / CIP 109463 / NCPPB 4357 / Et1/99), this protein is Protein NrdI.